The following is a 118-amino-acid chain: UPF0295 protein BA_0538/GBAA_0538/BAS0506 (118 aa).

2 consecutive transmembrane segments (helical) span residues 12-32 (IRTF…LGVF) and 43-63 (FMMV…WIGM).

It belongs to the UPF0295 family.

Its subcellular location is the cell membrane. The chain is UPF0295 protein BA_0538/GBAA_0538/BAS0506 from Bacillus anthracis.